The primary structure comprises 166 residues: Ureidoglycolate lyase (166 aa).

This sequence belongs to the ureidoglycolate lyase family. Homodimer. Ni(2+) is required as a cofactor.

The catalysed reaction is (S)-ureidoglycolate = urea + glyoxylate. It functions in the pathway nitrogen metabolism; (S)-allantoin degradation. Functionally, catalyzes the catabolism of the allantoin degradation intermediate (S)-ureidoglycolate, generating urea and glyoxylate. Involved in the utilization of allantoin as nitrogen source. The chain is Ureidoglycolate lyase from Agrobacterium fabrum (strain C58 / ATCC 33970) (Agrobacterium tumefaciens (strain C58)).